A 288-amino-acid polypeptide reads, in one-letter code: Acetyl-coenzyme A carboxylase carboxyl transferase subunit beta (288 aa).

A CoA carboxyltransferase N-terminal domain is found at 32–288; sequence LFAKCPACKH…LELHTEVENV (257 aa). Positions 36, 39, 54, and 57 each coordinate Zn(2+). The segment at 36–57 adopts a C4-type zinc-finger fold; that stretch reads CPACKHTIYQKDLGKNKVCPNC.

The protein belongs to the AccD/PCCB family. Acetyl-CoA carboxylase is a heterohexamer composed of biotin carboxyl carrier protein (AccB), biotin carboxylase (AccC) and two subunits each of ACCase subunit alpha (AccA) and ACCase subunit beta (AccD). The cofactor is Zn(2+).

It localises to the cytoplasm. The enzyme catalyses N(6)-carboxybiotinyl-L-lysyl-[protein] + acetyl-CoA = N(6)-biotinyl-L-lysyl-[protein] + malonyl-CoA. The protein operates within lipid metabolism; malonyl-CoA biosynthesis; malonyl-CoA from acetyl-CoA: step 1/1. Its function is as follows. Component of the acetyl coenzyme A carboxylase (ACC) complex. Biotin carboxylase (BC) catalyzes the carboxylation of biotin on its carrier protein (BCCP) and then the CO(2) group is transferred by the transcarboxylase to acetyl-CoA to form malonyl-CoA. This chain is Acetyl-coenzyme A carboxylase carboxyl transferase subunit beta, found in Lactococcus lactis subsp. cremoris (strain SK11).